Here is a 170-residue protein sequence, read N- to C-terminus: 4-hydroxyphenylacetate 3-monooxygenase reductase component (170 aa).

It belongs to the non-flavoprotein flavin reductase family. HpaC subfamily. As to quaternary structure, monomer. HPA 3-hydroxylase consists of a reductase component HpaC and an oxygenase component HpaB. Some form of interactions between the reductase and the oxygenase facilitate the transfer of FADH(-) to the oxygenase in P.aeruginosa, although interactions are not required in other species.

It carries out the reaction FADH2 + NAD(+) = FAD + NADH + 2 H(+). It participates in aromatic compound metabolism; 4-hydroxyphenylacetate degradation; pyruvate and succinate semialdehyde from 4-hydroxyphenylacetate: step 1/7. Its activity is regulated as follows. The rate of FAD reduction is independent of the presence of HPA, demonstrating that, in contrast to HPAH from A.baumannii, the activity of the HPAH reductase is not allosterically regulated by the substrate. Its function is as follows. Reductase component of the 4-hydroxyphenylacetate (HPA) 3-hydroxylase. Catalyzes the reduction of FAD by NADH. The reduced flavin is then transferred to the oxygenase component HpaB. Is also able to reduce FMN and riboflavin, but preferentially binds FAD. Has no activity with NADPH as the reductant. The polypeptide is 4-hydroxyphenylacetate 3-monooxygenase reductase component (Pseudomonas aeruginosa (strain ATCC 15692 / DSM 22644 / CIP 104116 / JCM 14847 / LMG 12228 / 1C / PRS 101 / PAO1)).